The following is a 244-amino-acid chain: Phosphonates import ATP-binding protein PhnC 2 (244 aa).

Positions L3–L242 constitute an ABC transporter domain. Residue G36–S43 participates in ATP binding.

This sequence belongs to the ABC transporter superfamily. Phosphonates importer (TC 3.A.1.9.1) family. The complex is composed of two ATP-binding proteins (PhnC), two transmembrane proteins (PhnE) and a solute-binding protein (PhnD).

The protein resides in the cell membrane. The enzyme catalyses phosphonate(out) + ATP + H2O = phosphonate(in) + ADP + phosphate + H(+). Functionally, part of the ABC transporter complex PhnCDE involved in phosphonates import. Responsible for energy coupling to the transport system. The sequence is that of Phosphonates import ATP-binding protein PhnC 2 from Halalkalibacterium halodurans (strain ATCC BAA-125 / DSM 18197 / FERM 7344 / JCM 9153 / C-125) (Bacillus halodurans).